Consider the following 152-residue polypeptide: Deoxyuridine 5'-triphosphate nucleotidohydrolase (152 aa).

Residues 71–73 (RSG), N84, 88–90 (LID), and M98 contribute to the substrate site.

Belongs to the dUTPase family. It depends on Mg(2+) as a cofactor.

It catalyses the reaction dUTP + H2O = dUMP + diphosphate + H(+). The protein operates within pyrimidine metabolism; dUMP biosynthesis; dUMP from dCTP (dUTP route): step 2/2. Its function is as follows. This enzyme is involved in nucleotide metabolism: it produces dUMP, the immediate precursor of thymidine nucleotides and it decreases the intracellular concentration of dUTP so that uracil cannot be incorporated into DNA. The polypeptide is Deoxyuridine 5'-triphosphate nucleotidohydrolase (Aeromonas hydrophila subsp. hydrophila (strain ATCC 7966 / DSM 30187 / BCRC 13018 / CCUG 14551 / JCM 1027 / KCTC 2358 / NCIMB 9240 / NCTC 8049)).